Reading from the N-terminus, the 343-residue chain is Ribosomal RNA small subunit methyltransferase C (343 aa).

This sequence belongs to the methyltransferase superfamily. RsmC family. In terms of assembly, monomer.

The protein localises to the cytoplasm. The enzyme catalyses guanosine(1207) in 16S rRNA + S-adenosyl-L-methionine = N(2)-methylguanosine(1207) in 16S rRNA + S-adenosyl-L-homocysteine + H(+). Functionally, specifically methylates the guanine in position 1207 of 16S rRNA in the 30S particle. The chain is Ribosomal RNA small subunit methyltransferase C from Escherichia coli (strain SMS-3-5 / SECEC).